A 384-amino-acid polypeptide reads, in one-letter code: tRNA-specific 2-thiouridylase MnmA (384 aa).

ATP contacts are provided by residues 18 to 25 and Leu-44; that span reads AMSGGVDS. The active-site Nucleophile is Cys-112. Cysteines 112 and 209 form a disulfide. An ATP-binding site is contributed by Gly-136. The interval 159–161 is interaction with tRNA; it reads RDQ. Cys-209 (cysteine persulfide intermediate) is an active-site residue.

This sequence belongs to the MnmA/TRMU family.

It is found in the cytoplasm. The enzyme catalyses S-sulfanyl-L-cysteinyl-[protein] + uridine(34) in tRNA + AH2 + ATP = 2-thiouridine(34) in tRNA + L-cysteinyl-[protein] + A + AMP + diphosphate + H(+). Its function is as follows. Catalyzes the 2-thiolation of uridine at the wobble position (U34) of tRNA, leading to the formation of s(2)U34. In Methylobacterium radiotolerans (strain ATCC 27329 / DSM 1819 / JCM 2831 / NBRC 15690 / NCIMB 10815 / 0-1), this protein is tRNA-specific 2-thiouridylase MnmA.